The following is a 170-amino-acid chain: Transcriptional repressor NrdR (170 aa).

A zinc finger lies at 3–34 (CPFCRHPDSRVVDSRVTDDGTAIRRRRSCPEC). In terms of domain architecture, ATP-cone spans 46 to 136 (LSVIKRSGVI…VYRGFESLED (91 aa)). Residues 151–170 (ERSETVERGRPVPSRGVDDR) are disordered.

The protein belongs to the NrdR family. Requires Zn(2+) as cofactor.

Its function is as follows. Negatively regulates transcription of bacterial ribonucleotide reductase nrd genes and operons by binding to NrdR-boxes. In Acidothermus cellulolyticus (strain ATCC 43068 / DSM 8971 / 11B), this protein is Transcriptional repressor NrdR.